We begin with the raw amino-acid sequence, 421 residues long: Acetate kinase (421 aa).

Mg(2+) is bound at residue asparagine 7. Lysine 14 serves as a coordination point for ATP. Residue arginine 91 participates in substrate binding. The Proton donor/acceptor role is filled by aspartate 148. ATP-binding positions include 208–212 (HIGNG) and 283–285 (DRR). Glutamate 387 contributes to the Mg(2+) binding site.

It belongs to the acetokinase family. Homodimer. The cofactor is Mg(2+). Mn(2+) serves as cofactor.

The protein resides in the cytoplasm. It carries out the reaction acetate + ATP = acetyl phosphate + ADP. It participates in metabolic intermediate biosynthesis; acetyl-CoA biosynthesis; acetyl-CoA from acetate: step 1/2. Catalyzes the formation of acetyl phosphate from acetate and ATP. Can also catalyze the reverse reaction. The polypeptide is Acetate kinase (Geobacter sulfurreducens (strain ATCC 51573 / DSM 12127 / PCA)).